The chain runs to 204 residues: Probable nicotinate-nucleotide adenylyltransferase (204 aa).

Belongs to the NadD family.

The catalysed reaction is nicotinate beta-D-ribonucleotide + ATP + H(+) = deamido-NAD(+) + diphosphate. Its pathway is cofactor biosynthesis; NAD(+) biosynthesis; deamido-NAD(+) from nicotinate D-ribonucleotide: step 1/1. Its function is as follows. Catalyzes the reversible adenylation of nicotinate mononucleotide (NaMN) to nicotinic acid adenine dinucleotide (NaAD). In Dehalococcoides mccartyi (strain ATCC BAA-2266 / KCTC 15142 / 195) (Dehalococcoides ethenogenes (strain 195)), this protein is Probable nicotinate-nucleotide adenylyltransferase.